Here is a 373-residue protein sequence, read N- to C-terminus: Putative C-P lyase subunit protein HtxH (373 aa).

The protein belongs to the PhnI family.

Its function is as follows. Belongs to an operon involved in hypophosphite oxidation. Exact function not known. The sequence is that of Putative C-P lyase subunit protein HtxH (htxH) from Stutzerimonas stutzeri (Pseudomonas stutzeri).